The chain runs to 284 residues: Tryptophan 2,3-dioxygenase (284 aa).

Substrate-binding positions include 51–55 (FIIQH), Tyr113, and Arg117. His240 serves as a coordination point for heme. Residue Thr254 coordinates substrate.

The protein belongs to the tryptophan 2,3-dioxygenase family. In terms of assembly, homotetramer. The cofactor is heme.

It catalyses the reaction L-tryptophan + O2 = N-formyl-L-kynurenine. It functions in the pathway amino-acid degradation; L-tryptophan degradation via kynurenine pathway; L-kynurenine from L-tryptophan: step 1/2. Heme-dependent dioxygenase that catalyzes the oxidative cleavage of the L-tryptophan (L-Trp) pyrrole ring and converts L-tryptophan to N-formyl-L-kynurenine. Catalyzes the oxidative cleavage of the indole moiety. The sequence is that of Tryptophan 2,3-dioxygenase from Rhodococcus jostii (strain RHA1).